The chain runs to 349 residues: DNA repair protein XRCC3 (349 aa).

Position 1 is an N-acetylmethionine (Met-1). 107–114 (GCSSAGKT) contacts ATP.

The protein belongs to the RecA family. RAD51 subfamily. As to quaternary structure, interacts with RAD51C and RAD51. Part of the CX3 complex consisting of RAD51C and XRCC3; the complex has a ring-like structure arranged into a flat disc around a central channel; CX3 can interact with RAD51 in vitro. Forms a complex with FANCD2, BRCA2 and phosphorylated FANCG. Interacts with SWSAP1 and ZSWIM7; involved in homologous recombination repair. Interacts directly with PALB2 which may serve as a scaffold for a HR complex containing PALB2, BRCA2, RAD51C, RAD51 and XRCC3.

Its subcellular location is the nucleus. It localises to the cytoplasm. The protein resides in the perinuclear region. The protein localises to the mitochondrion matrix. Its function is as follows. Involved in the homologous recombination repair (HRR) pathway of double-stranded DNA, thought to repair chromosomal fragmentation, translocations and deletions. Part of the RAD21 paralog protein complex CX3 which acts in the BRCA1-BRCA2-dependent HR pathway. Upon DNA damage, CX3 acts downstream of RAD51 recruitment; the complex binds predominantly to the intersection of the four duplex arms of the Holliday junction (HJ) and to junctions of replication forks. Involved in HJ resolution and thus in processing HR intermediates late in the DNA repair process; the function may be linked to the CX3 complex and seems to involve GEN1 during mitotic cell cycle progression. Part of a PALB2-scaffolded HR complex containing BRCA2 and RAD51C and which is thought to play a role in DNA repair by HR. Plays a role in regulating mitochondrial DNA copy number under conditions of oxidative stress in the presence of RAD51 and RAD51C. This is DNA repair protein XRCC3 (Xrcc3) from Mus musculus (Mouse).